The sequence spans 246 residues: Transcription factor A, mitochondrial (246 aa).

Residues Met-1 to Phe-42 constitute a mitochondrion transit peptide. Residues Pro-50–Lys-118 constitute a DNA-binding region (HMG box 1). Phosphoserine; by PKA is present on residues Ser-55, Ser-56, and Ser-61. Phosphothreonine is present on Thr-122. The segment at residues Pro-155–Glu-219 is a DNA-binding region (HMG box 2). Position 160 is a phosphoserine; by PKA (Ser-160). Ser-193 and Ser-195 each carry phosphoserine.

Monomer; binds DNA as a monomer. Homodimer. Component of the mitochondrial transcription initiation complex, composed at least of TFB2M, TFAM and POLRMT. In this complex TFAM recruits POLRMT to the promoter whereas TFB2M induces structural changes in POLRMT to enable promoter opening and trapping of the DNA non-template strand. Upon metabolic stress, forms a complex composed of FOXO3, SIRT3, TFAM and POLRMT. Interacts with TFB1M and TFB2M. Interacts with CLPX; this enhances DNA-binding. Phosphorylation by PKA within the HMG box 1 impairs DNA binding and promotes degradation by the AAA+ Lon protease.

The protein localises to the mitochondrion. Its subcellular location is the mitochondrion matrix. The protein resides in the mitochondrion nucleoid. Its function is as follows. Binds to the mitochondrial light strand promoter and functions in mitochondrial transcription regulation. Component of the mitochondrial transcription initiation complex, composed at least of TFB2M, TFAM and POLRMT that is required for basal transcription of mitochondrial DNA. In this complex, TFAM recruits POLRMT to a specific promoter whereas TFB2M induces structural changes in POLRMT to enable promoter opening and trapping of the DNA non-template strand. Required for accurate and efficient promoter recognition by the mitochondrial RNA polymerase. Promotes transcription initiation from the HSP1 and the light strand promoter by binding immediately upstream of transcriptional start sites. Is able to unwind DNA. Bends the mitochondrial light strand promoter DNA into a U-turn shape via its HMG boxes. Required for maintenance of normal levels of mitochondrial DNA. May play a role in organizing and compacting mitochondrial DNA. This Homo sapiens (Human) protein is Transcription factor A, mitochondrial.